We begin with the raw amino-acid sequence, 155 residues long: Small ribosomal subunit protein uS7 (155 aa).

This sequence belongs to the universal ribosomal protein uS7 family. In terms of assembly, part of the 30S ribosomal subunit. Contacts proteins S9 and S11.

One of the primary rRNA binding proteins, it binds directly to 16S rRNA where it nucleates assembly of the head domain of the 30S subunit. Is located at the subunit interface close to the decoding center, probably blocks exit of the E-site tRNA. The chain is Small ribosomal subunit protein uS7 from Chlorobium luteolum (strain DSM 273 / BCRC 81028 / 2530) (Pelodictyon luteolum).